Reading from the N-terminus, the 104-residue chain is PTS system lactose-specific EIIA component (104 aa).

Residues E4–R102 form the PTS EIIA type-3 domain. H78 serves as the catalytic Tele-phosphohistidine intermediate. Position 78 is a phosphohistidine; by HPr (H78). Position 81 (D81) interacts with Mg(2+).

Homotrimer. It depends on Mg(2+) as a cofactor.

It localises to the cytoplasm. Its function is as follows. The phosphoenolpyruvate-dependent sugar phosphotransferase system (sugar PTS), a major carbohydrate active transport system, catalyzes the phosphorylation of incoming sugar substrates concomitantly with their translocation across the cell membrane. The enzyme II LacEF PTS system is involved in lactose transport. The protein is PTS system lactose-specific EIIA component of Streptococcus mutans serotype c (strain ATCC 700610 / UA159).